Reading from the N-terminus, the 367-residue chain is Serine/threonine-protein kinase Sgk2 (367 aa).

The interval 1–26 (MNSSPAGTPSPQPSRANGNINLGPSA) is disordered. A Phosphoserine modification is found at S10. The region spanning 35–292 (FDFLKVIGKG…FLEIKNHVFF (258 aa)) is the Protein kinase domain. ATP contacts are provided by residues 41 to 49 (IGKGNYGKV) and K64. A Nuclear localization signal motif is present at residues 68–78 (KKSILKKKEQS). D159 (proton acceptor) is an active-site residue. T193 carries the phosphothreonine; by PDPK1 modification. The region spanning 293–367 (SPINWDDLYH…APEDDDILDC (75 aa)) is the AGC-kinase C-terminal domain. Residues S334 and S356 each carry the phosphoserine modification. Y357 carries the post-translational modification Phosphotyrosine.

It belongs to the protein kinase superfamily. AGC Ser/Thr protein kinase family. Activated by phosphorylation on Ser-356 by an unknown kinase (may be mTORC2 but not confirmed), transforming it into a substrate for PDPK1 which then phosphorylates it on Thr-193. As to expression, highly expressed in liver, kidney and pancreas, and at lower levels in brain.

It is found in the cytoplasm. It localises to the nucleus. The catalysed reaction is L-seryl-[protein] + ATP = O-phospho-L-seryl-[protein] + ADP + H(+). It catalyses the reaction L-threonyl-[protein] + ATP = O-phospho-L-threonyl-[protein] + ADP + H(+). Its activity is regulated as follows. Two specific sites, one in the kinase domain (Thr-193) and the other in the C-terminal regulatory region (Ser-356), need to be phosphorylated for its full activation. Its function is as follows. Serine/threonine-protein kinase which is involved in the regulation of a wide variety of ion channels, membrane transporters, cell growth, survival and proliferation. Up-regulates Na(+) channels: SCNN1A/ENAC, K(+) channels: KCNA3/Kv1.3, KCNE1 and KCNQ1, amino acid transporter: SLC6A19, glutamate transporter: SLC1A6/EAAT4, glutamate receptors: GRIA1/GLUR1 and GRIK2/GLUR6, Na(+)/H(+) exchanger: SLC9A3/NHE3, and the Na(+)/K(+) ATPase. This chain is Serine/threonine-protein kinase Sgk2 (SGK2), found in Homo sapiens (Human).